Here is a 526-residue protein sequence, read N- to C-terminus: Probable polyol transporter 4 (526 aa).

2 disordered regions span residues 1–21 and 28–47; these read MMKN…AVSV and YQRM…AEAR. The span at 29–47 shows a compositional bias: basic and acidic residues; it reads QRMDSDAEESQNHREAEAR. Helical transmembrane passes span 63-83, 92-112, 125-145, 153-173, 180-200, 215-235, 300-320, 340-360, 371-391, 395-415, 437-457, and 465-485; these read SLNN…VLFI, VQTE…SLAG, MALA…APSF, TLAG…IAEI, GFFT…GYVS, IMLA…CVIP, MLIV…DATV, AATV…TFLI, VSTI…TFLG, LGIT…SIGM, ALGA…FLSV, and GTFF…YVLV.

Belongs to the major facilitator superfamily. Sugar transporter (TC 2.A.1.1) family.

It is found in the membrane. Plasma membrane sugar-proton symporter. The polypeptide is Probable polyol transporter 4 (PLT4) (Arabidopsis thaliana (Mouse-ear cress)).